A 605-amino-acid polypeptide reads, in one-letter code: Aspartate--tRNA(Asp/Asn) ligase (605 aa).

Glutamate 186 lines the L-aspartate pocket. The tract at residues 210 to 213 (QQFK) is aspartate. Arginine 232 and histidine 460 together coordinate L-aspartate. An ATP-binding site is contributed by 232–234 (RDE). An ATP-binding site is contributed by glutamate 494. Arginine 501 contributes to the L-aspartate binding site. Position 546–549 (546–549 (GLDR)) interacts with ATP.

This sequence belongs to the class-II aminoacyl-tRNA synthetase family. Type 1 subfamily. In terms of assembly, homodimer.

It localises to the cytoplasm. The catalysed reaction is tRNA(Asx) + L-aspartate + ATP = L-aspartyl-tRNA(Asx) + AMP + diphosphate. Functionally, aspartyl-tRNA synthetase with relaxed tRNA specificity since it is able to aspartylate not only its cognate tRNA(Asp) but also tRNA(Asn). Reaction proceeds in two steps: L-aspartate is first activated by ATP to form Asp-AMP and then transferred to the acceptor end of tRNA(Asp/Asn). The sequence is that of Aspartate--tRNA(Asp/Asn) ligase from Chlorobium chlorochromatii (strain CaD3).